The following is a 114-amino-acid chain: Ig kappa chain V region AH80-5 (114 aa).

The tract at residues 1 to 22 (IVMTQTPSSKSVPVGDTVTINC) is framework-1. The segment at 23–35 (QAAQSVYSNNRLS) is complementarity-determining-1. The interval 36 to 50 (WFQQKPGQPPKGLIY) is framework-2. Residues 51-57 (YASTLAS) are complementarity-determining-2. Residues 58–93 (GVQQDPSRFKGSGSGTQFTLTISDVQCBBAATVYYC) form a framework-3 region. The tract at residues 94 to 103 (QGYKSSDTRA) is complementarity-determining-3. Residues 104–113 (FGGGTEVVVK) form a framework-4 region.

The polypeptide is Ig kappa chain V region AH80-5 (Oryctolagus cuniculus (Rabbit)).